The chain runs to 390 residues: Cathepsin D (390 aa).

Positions V1–Q44 are cleaved as a propeptide — activation peptide. Residues Y59 to A385 enclose the Peptidase A1 domain. 2 disulfide bridges follow: C71/C140 and C90/C97. D77 is a catalytic residue. 2 N-linked (GlcNAc...) asparagine glycosylation sites follow: N114 and N241. C264 and C268 are oxidised to a cystine. D273 is an active-site residue. A disulfide bridge links C307 with C344.

Belongs to the peptidase A1 family. Consists of a light chain and a heavy chain. Interacts with ADAM30; this leads to activation of CTSD. Interacts with GRN; stabilizes CTSD; increases its proteolytic activity. Post-translationally, N- and O-glycosylated. Undergoes proteolytic cleavage and activation by ADAM30.

Its subcellular location is the lysosome. The protein resides in the melanosome. It localises to the secreted. It is found in the extracellular space. It carries out the reaction Specificity similar to, but narrower than, that of pepsin A. Does not cleave the 4-Gln-|-His-5 bond in B chain of insulin.. In terms of biological role, acid protease active in intracellular protein breakdown. Plays a role in APP processing following cleavage and activation by ADAM30 which leads to APP degradation. This Bos taurus (Bovine) protein is Cathepsin D (CTSD).